We begin with the raw amino-acid sequence, 407 residues long: MAYDLLLERFLRYAKINTRSDENATRTPTTQSQVDFALNILKPELEELGLSNIHYLESNGYLVATLPANDDRLTRKIGFISHMDTADFNAEGVSPQVIESYDGGIIPLGTSGYNLDPADFPNLQNYIGQTLITTDGTTLLGADDKSGIAEIMTALAHLKANPEIKHCEIRVGFGPDEEIGIGADKFDVDDFDVDFAYTVDGGPLGELQYETFSAAGAELIFHGRNVHPGTAKGQMVNALQLAIDFHNQLPAEDRPELTDGYQGFNHLQTMTGTVEEANSSYIIRDFETESFENRKATFQEIADKMNQAYGQTRVDLVIKDQYYNMRQVIEKDMMPVELAKEVMEDLGIVPVIEPIRGGTDGSKISFKGIPTPNIFAGGENMHGRYEFVSLQTMEKAVDVILGIISKP.

Residue His-82 participates in Zn(2+) binding. Asp-84 is an active-site residue. Position 143 (Asp-143) interacts with Zn(2+). Catalysis depends on Glu-177, which acts as the Proton acceptor. Residues Glu-178, Asp-200, and His-382 each contribute to the Zn(2+) site.

Belongs to the peptidase M20B family. Zn(2+) is required as a cofactor.

It localises to the cytoplasm. The catalysed reaction is Release of the N-terminal residue from a tripeptide.. Its function is as follows. Cleaves the N-terminal amino acid of tripeptides. This Streptococcus thermophilus (strain ATCC BAA-491 / LMD-9) protein is Peptidase T.